A 167-amino-acid polypeptide reads, in one-letter code: uncharacterized protein (167 aa).

Positions N148–Y167 are disordered.

This is an uncharacterized protein from Homo sapiens (Human).